A 901-amino-acid chain; its full sequence is Protein SOK1 (901 aa).

Disordered regions lie at residues 1 to 87 (MDQP…QNII), 106 to 139 (RSSG…SDLK), and 162 to 231 (NDDN…NASN). Over residues 10-51 (PTTASNPAPSSTNSSSAPSATNSKQERSSSSLSKPSSVVPSK) the composition is skewed to low complexity. 2 positions are modified to phosphoserine: serine 40 and serine 53. Polar residues-rich tracts occupy residues 74-87 (GDTS…QNII) and 106-115 (RSSGVITPSM). The segment covering 116 to 138 (SLNASTNATNNDSSGNSANSSDL) has biased composition (low complexity). Residues serine 191 and serine 193 each carry the phosphoserine modification. Residues 220-231 (AAQQQPPGNASN) show a composition bias toward polar residues. Serine 245 is modified (phosphoserine).

It belongs to the TCP11 family.

Its subcellular location is the nucleus. Functionally, high copy suppressor of a cyclic AMP-dependent protein kinase mutant. The protein is Protein SOK1 (SOK1) of Saccharomyces cerevisiae (strain ATCC 204508 / S288c) (Baker's yeast).